A 432-amino-acid chain; its full sequence is UDP-N-acetylglucosamine 1-carboxyvinyltransferase (432 aa).

22–23 (KN) contributes to the phosphoenolpyruvate binding site. R96 contacts UDP-N-acetyl-alpha-D-glucosamine. The active-site Proton donor is the C120. The residue at position 120 (C120) is a 2-(S-cysteinyl)pyruvic acid O-phosphothioketal. UDP-N-acetyl-alpha-D-glucosamine-binding positions include 125–129 (RPVDL), D310, and I332.

It belongs to the EPSP synthase family. MurA subfamily.

Its subcellular location is the cytoplasm. The catalysed reaction is phosphoenolpyruvate + UDP-N-acetyl-alpha-D-glucosamine = UDP-N-acetyl-3-O-(1-carboxyvinyl)-alpha-D-glucosamine + phosphate. It functions in the pathway cell wall biogenesis; peptidoglycan biosynthesis. Functionally, cell wall formation. Adds enolpyruvyl to UDP-N-acetylglucosamine. This chain is UDP-N-acetylglucosamine 1-carboxyvinyltransferase, found in Caulobacter sp. (strain K31).